Consider the following 317-residue polypeptide: Transaldolase (317 aa).

The active-site Schiff-base intermediate with substrate is Lys-125.

Belongs to the transaldolase family. Type 1 subfamily. Homodimer.

The protein resides in the cytoplasm. It carries out the reaction D-sedoheptulose 7-phosphate + D-glyceraldehyde 3-phosphate = D-erythrose 4-phosphate + beta-D-fructose 6-phosphate. It participates in carbohydrate degradation; pentose phosphate pathway; D-glyceraldehyde 3-phosphate and beta-D-fructose 6-phosphate from D-ribose 5-phosphate and D-xylulose 5-phosphate (non-oxidative stage): step 2/3. Transaldolase is important for the balance of metabolites in the pentose-phosphate pathway. The polypeptide is Transaldolase (Delftia acidovorans (strain DSM 14801 / SPH-1)).